The chain runs to 253 residues: Phosphate import ATP-binding protein PstB 1 (253 aa).

Residues 7 to 248 (LQIRDLSVYY…PKRKETEDYI (242 aa)) form the ABC transporter domain. 39–46 (GPSGSGKS) contributes to the ATP binding site.

This sequence belongs to the ABC transporter superfamily. Phosphate importer (TC 3.A.1.7) family. The complex is composed of two ATP-binding proteins (PstB), two transmembrane proteins (PstC and PstA) and a solute-binding protein (PstS).

Its subcellular location is the cell membrane. The enzyme catalyses phosphate(out) + ATP + H2O = ADP + 2 phosphate(in) + H(+). Functionally, part of the ABC transporter complex PstSACB involved in phosphate import. Responsible for energy coupling to the transport system. The chain is Phosphate import ATP-binding protein PstB 1 from Streptococcus pyogenes serotype M2 (strain MGAS10270).